Consider the following 695-residue polypeptide: uncharacterized protein (695 aa).

This is an uncharacterized protein from Xanthomonas campestris pv. campestris (strain ATCC 33913 / DSM 3586 / NCPPB 528 / LMG 568 / P 25).